The primary structure comprises 87 residues: UPF0250 protein BCc_307 (87 aa).

Belongs to the UPF0250 family.

This is UPF0250 protein BCc_307 from Buchnera aphidicola subsp. Cinara cedri (strain Cc).